The following is a 271-amino-acid chain: Urease accessory protein UreD (271 aa).

Belongs to the UreD family. UreD, UreF and UreG form a complex that acts as a GTP-hydrolysis-dependent molecular chaperone, activating the urease apoprotein by helping to assemble the nickel containing metallocenter of UreC. The UreE protein probably delivers the nickel.

It localises to the cytoplasm. Required for maturation of urease via the functional incorporation of the urease nickel metallocenter. This Azorhizobium caulinodans (strain ATCC 43989 / DSM 5975 / JCM 20966 / LMG 6465 / NBRC 14845 / NCIMB 13405 / ORS 571) protein is Urease accessory protein UreD.